Consider the following 504-residue polypeptide: Xylose import ATP-binding protein XylG (504 aa).

ABC transporter domains are found at residues Leu5–Glu242 and Leu259–Ala500. Gly37–Ser44 is an ATP binding site.

This sequence belongs to the ABC transporter superfamily. Xylose importer (TC 3.A.1.2.4) family. In terms of assembly, the complex is composed of two ATP-binding proteins (XylG), two transmembrane proteins (XylH) and a solute-binding protein (XylF).

It localises to the cell inner membrane. It catalyses the reaction D-xylose(out) + ATP + H2O = D-xylose(in) + ADP + phosphate + H(+). In terms of biological role, part of the ABC transporter complex XylFGH involved in xylose import. Responsible for energy coupling to the transport system. The sequence is that of Xylose import ATP-binding protein XylG from Histophilus somni (strain 129Pt) (Haemophilus somnus).